Reading from the N-terminus, the 518-residue chain is Suppressor of hairless homolog (518 aa).

Residues 22 to 59 (ETDQQRSHVKERVNGTPNQNGGTSTSSKPRSVFENRPP) are disordered. Basic and acidic residues predominate over residues 24 to 34 (DQQRSHVKERV). Over residues 36 to 50 (GTPNQNGGTSTSSKP) the composition is skewed to polar residues. 3 consecutive DNA-binding regions follow at residues 89–96 (KSYGNEKR), 223–232 (RLRSQTVSTR), and 296–328 (RKVDKQTAILNADDPVSQLHKCAFYLKDSERMY). Residues 386–476 (PVVHSLQLNG…YPTNLTFTFT (91 aa)) form the IPT/TIG domain.

It belongs to the Su(H) family. As to quaternary structure, interacts with activated Notch proteins.

Its subcellular location is the nucleus. In terms of biological role, transcriptional regulator that plays a central role in Notch signaling, a signaling pathway involved in cell-cell communication that regulates a broad spectrum of cell-fate determinations. Acts as a transcriptional repressor when it is not associated with Notch proteins. When associated with some Notch protein, it acts as a transcriptional activator that activates transcription of Notch target genes. This chain is Suppressor of hairless homolog (RBP-JK), found in Halocynthia roretzi (Sea squirt).